Consider the following 632-residue polypeptide: Palmitoyltransferase ZDHHC17 (632 aa).

The Cytoplasmic segment spans residues 1-304 (MQREEGFNTK…LKADKEFRQK (304 aa)). The necessary and sufficient for interaction with DNAJC5 and SNAP25 stretch occupies residues 11–305 (MADGPDEYDT…KADKEFRQKV (295 aa)). ANK repeat units follow at residues 51–86 (THID…VRQP), 89–118 (ENVT…IVDQ), 123–152 (LNST…DPSL), 156–185 (EGCS…DVDM), 189–219 (NGMT…SVNL), 224–253 (HKNT…NVDA), and 257–286 (KGES…AKGY). Helical transmembrane passes span 305-325 (VMLG…DLNI) and 326-346 (DSWL…QFLS). Over 347–357 (KSFFDHSMHSA) the chain is Cytoplasmic. Residues 358-378 (LPLGIYLATKFWMYVTWFFWF) traverse the membrane as a helical segment. Topologically, residues 379-381 (WND) are lumenal. Residues 382–402 (LNFLFIHLPFLANSVALFYNF) form a helical membrane-spanning segment. At 403–480 (GKSWKSDPGI…GNCVGAGNHR (78 aa)) the chain is on the cytoplasmic side. One can recognise a DHHC domain in the interval 437 to 487 (IFCSTCLIRKPVRSKHCGVCNRCIAKFDHHCPWVGNCVGAGNHRYFMGYLF). The S-palmitoyl cysteine intermediate role is filled by Cys-467. The helical transmembrane segment at 481–501 (YFMGYLFFLLFMICWMIYGCI) threads the bilayer. The Lumenal portion of the chain corresponds to 502-529 (SYWGLHCETTYTKDGFWTYITQIATCSP). The helical transmembrane segment at 530–550 (WMFWMFLNSVFHFMWVAVLLM) threads the bilayer. Topologically, residues 551-632 (CQMYQISCLG…QISGSGYQLV (82 aa)) are cytoplasmic.

The protein belongs to the DHHC palmitoyltransferase family. AKR/ZDHHC17 subfamily. As to quaternary structure, interacts (via ANK repeats) with numerous proteins (via the consensus sequence motif [VIAP]-[VIT]-x-x-Q-P). Interacts (via ANK repeats) with CLIP3. Interacts (via ANK repeats) with HTT; this interaction is inversely correlated to the length of the polyglutamine tract added to the huntingtin protein in Huntington disease. Interacts (via ANK repeats) with DNAJC5 (via C-terminus). Interacts (via ANK repeats) with MAP6. Interacts (via ANK repeats) with SNAP23. Interacts (via ANK repeats) with SNAP25. Interacts (via ANK repeats) with EVL. Interacts with SPRED1 and SPRED3. Interacts with GPM6A and OPTN. May interact (via ANK repeats) with SPRED2. May interact with NTRK1; may regulate its localization and function. Autopalmitoylated. Autopalmitoylation has a regulatory role in ZDHHC17-mediated Mg(2+) transport. Expressed in all brain regions. Expression is highest in the cortex, cerebellum, occipital lobe and caudate and lowest in the spinal cord. Expression is also seen in testis, pancreas, heart and kidney.

The protein resides in the golgi apparatus membrane. It localises to the cytoplasmic vesicle membrane. The protein localises to the presynaptic cell membrane. It catalyses the reaction L-cysteinyl-[protein] + hexadecanoyl-CoA = S-hexadecanoyl-L-cysteinyl-[protein] + CoA. The catalysed reaction is L-cysteinyl-[protein] + tetradecanoyl-CoA = S-tetradecanoyl-L-cysteinyl-[protein] + CoA. The enzyme catalyses L-cysteinyl-[protein] + octadecanoyl-CoA = S-octadecanoyl-L-cysteinyl-[protein] + CoA. In terms of biological role, palmitoyltransferase that catalyzes the addition of palmitate onto various protein substrates and is involved in a variety of cellular processes. Has no stringent fatty acid selectivity and in addition to palmitate can also transfer onto target proteins myristate from tetradecanoyl-CoA and stearate from octadecanoyl-CoA. Palmitoyltransferase specific for a subset of neuronal proteins, including SNAP25, DLG4/PSD95, GAD2, SYT1 and HTT. Also palmitoylates neuronal protein GPM6A as well as SPRED1 and SPRED3. Could also play a role in axonogenesis through the regulation of NTRK1 and the downstream ERK1/ERK2 signaling cascade. May be involved in the sorting or targeting of critical proteins involved in the initiating events of endocytosis at the plasma membrane. May play a role in Mg(2+) transport. Could also palmitoylate DNAJC5 and regulate its localization to the Golgi membrane. Palmitoylates CASP6, thereby preventing its dimerization and subsequent activation. The protein is Palmitoyltransferase ZDHHC17 of Homo sapiens (Human).